The following is a 303-amino-acid chain: Crk-like protein (303 aa).

One can recognise an SH2 domain in the interval 14-102 (WYMGPVSRQE…LDTTTLIEPA (89 aa)). One can recognise an SH3 1 domain in the interval 123–183 (DNLEYVRTLY…PVPYVEKLVR (61 aa)). Tyr127 and Tyr207 each carry phosphotyrosine. The segment at 184–234 (SSPHGKHGNRNSNSYGIPEPAHAYAQPQTTTPLPAVSGSPGAAITPLPSTQ) is disordered. An SH3 2 domain is found at 235–296 (NGPVFAKAIQ…PFTHVKIFDP (62 aa)).

This sequence belongs to the CRK family. Interacts with tyrosine-phosphorylated EPOR and INPP5D/SHIP1. Interacts with DOCK2 and DOCK5 via its first SH3 domain. Interacts with phosphorylated CBLB and IRS4. Interacts with BCAR1/CAS and NEDD9/HEF1.

Its function is as follows. May mediate the transduction of intracellular signals. The polypeptide is Crk-like protein (CRKL) (Homo sapiens (Human)).